The following is a 194-amino-acid chain: Imidazoleglycerol-phosphate dehydratase (194 aa).

The protein belongs to the imidazoleglycerol-phosphate dehydratase family.

It is found in the cytoplasm. It carries out the reaction D-erythro-1-(imidazol-4-yl)glycerol 3-phosphate = 3-(imidazol-4-yl)-2-oxopropyl phosphate + H2O. It functions in the pathway amino-acid biosynthesis; L-histidine biosynthesis; L-histidine from 5-phospho-alpha-D-ribose 1-diphosphate: step 6/9. This is Imidazoleglycerol-phosphate dehydratase from Listeria monocytogenes serovar 1/2a (strain ATCC BAA-679 / EGD-e).